The sequence spans 338 residues: Fusarubin cluster-specific transcription factor fsr6 (338 aa).

Residues 16–44 constitute a DNA-binding region (zn(2)-C6 fungal-type); that stretch reads CDACTTAKVRCSRTHPCERCEDNGQAKEC.

Its subcellular location is the nucleus. Functionally, transcription factor that regulates the expression of the gene cluster that mediates the biosynthesis of fusarubins, highly pigmented naphthoquinones responsible for the coloration of the fruiting bodies. This chain is Fusarubin cluster-specific transcription factor fsr6, found in Gibberella fujikuroi (strain CBS 195.34 / IMI 58289 / NRRL A-6831) (Bakanae and foot rot disease fungus).